The chain runs to 136 residues: DNA-directed RNA polymerase subunit omega (136 aa).

Belongs to the RNA polymerase subunit omega family. In terms of assembly, the RNAP catalytic core consists of 2 alpha, 1 beta, 1 beta' and 1 omega subunit. When a sigma factor is associated with the core the holoenzyme is formed, which can initiate transcription.

The catalysed reaction is RNA(n) + a ribonucleoside 5'-triphosphate = RNA(n+1) + diphosphate. Functionally, promotes RNA polymerase assembly. Latches the N- and C-terminal regions of the beta' subunit thereby facilitating its interaction with the beta and alpha subunits. This chain is DNA-directed RNA polymerase subunit omega, found in Acidiphilium cryptum (strain JF-5).